The following is a 1888-amino-acid chain: Tensin-1 (1888 aa).

Pro residues predominate over residues 21–31 (PQPPGTPPGPA). Residues 21 to 45 (PQPPGTPPGPARPERCEPGGAAPDP) are disordered. The Phorbol-ester/DAG-type zinc finger occupies 61 to 108 (THHFKVKAFKKVKPCGICRQAITREGCVCKVCSFSCHRKCQAKVAAPC). The tract at residues 132–174 (GEGDCRVGSSPKNLEEGGSMRVSPSIQPQPQSQPTSLSRNTSV) is disordered. The span at 154 to 167 (SPSIQPQPQSQPTS) shows a compositional bias: low complexity. Positions 175–347 (SRAMEDSCEL…HYFSGLLSGS (173 aa)) constitute a Phosphatase tensin-type domain. In terms of domain architecture, C2 tensin-type spans 352–478 (NKPLFLHHVI…GKVEFVFSYG (127 aa)). Residues Ser509 and Ser535 each carry the phosphoserine modification. Tyr537 carries the phosphotyrosine modification. Disordered stretches follow at residues 543–608 (KDSL…PQEK), 696–722 (VTNT…YSTE), and 789–854 (RSQS…SAET). Ser549 is modified (phosphoserine). Polar residues predominate over residues 571-584 (LSVSSDSGNSTAST). Ser604 is subject to Phosphoserine. Phosphoserine is present on Ser792. Positions 835–852 (RSPLQSLARSKPSPQLSA) are enriched in polar residues. A Phosphoserine modification is found at Ser867. Disordered stretches follow at residues 893–1077 (PLHK…RSPV) and 1109–1555 (EEME…AGSL). The span at 905–922 (PGASPLSSQPLLGSSRQS) shows a compositional bias: low complexity. 3 positions are modified to phosphoserine: Ser930, Ser935, and Ser952. The span at 962 to 986 (GSNQSFHPKSPASSTFLPSPHSSAG) shows a compositional bias: polar residues. A Phosphothreonine modification is found at Thr1015. Ser1054 carries the post-translational modification Phosphoserine. A compositionally biased stretch (polar residues) spans 1057–1069 (QYENQSPEATSPR). Residue Tyr1058 is modified to Phosphotyrosine. Residues Ser1062, Ser1118, and Ser1122 each carry the phosphoserine modification. Positions 1169 to 1179 (EVTKPPEEPRS) are enriched in basic and acidic residues. A compositionally biased stretch (low complexity) spans 1227–1239 (SPSPLSTSSPILS). Polar residues predominate over residues 1240–1257 (ADSTSVGSFPSVVSSDQG). Ser1279 carries the phosphoserine modification. Residues 1284–1300 (SYQSSSPVPVGGSSYNS) show a composition bias toward low complexity. The segment covering 1301–1322 (PDYSLQPFSSSPESQGQPQYSA) has biased composition (polar residues). O-linked (GalNAc...) serine glycosylation is present at Ser1321. Ser1331 bears the Phosphoserine mark. At Thr1343 the chain carries Phosphothreonine. Ser1346 carries the post-translational modification Phosphoserine. Thr1420 is subject to Phosphothreonine. The residue at position 1423 (Ser1423) is a Phosphoserine. Positions 1436 to 1446 (NLASSLHSNAV) are enriched in polar residues. Ser1448, Ser1463, and Ser1468 each carry phosphoserine. Residues 1490–1507 (LSRQSSASGYQAPSTPSF) are compositionally biased toward polar residues. Low complexity predominate over residues 1518–1530 (SSPATSPSPDSAA). 4 positions are modified to phosphoserine: Ser1535, Ser1547, Ser1554, and Ser1599. Positions 1616-1725 (WYKPEISREQ…ALPCKLVIPS (110 aa)) constitute an SH2 domain. A Phosphoserine modification is found at Ser1741. The PTB domain occupies 1751 to 1885 (ACNVLFVNSV…FVSKVMLSAG (135 aa)).

The protein belongs to the PTEN phosphatase protein family. In terms of assembly, binds to actin filaments and interacts with phosphotyrosine-containing proteins. Interacts with STARD8. Interacts with protein phosphatase PPP1CA. Interacts (via N-terminus) with Rho GTPase-activating protein DLC1; the interaction is decreased by phosphorylation of TNS1. Interacts with tyrosine-phosphorylated proteins BCAR1/p130Cas and PTK2/FAK; the interactions are increased by phosphorylation of TNS1. Post-translationally, extensively phosphorylated on serine and threonine residues in a p38 MAPK-dependent manner which reduces interaction with DLC1 and increases interaction with tyrosine-phosphorylated proteins including BCAR1/p130cas and PTK2/FAK. The majority of the phosphorylated Ser/Thr residues are immediately adjacent to a proline residue. Also phosphorylated on tyrosine residues. In terms of processing, rapidly cleaved by calpain II.

Its subcellular location is the cell surface. It localises to the cell junction. The protein resides in the focal adhesion. It is found in the cytoplasm. The protein localises to the cytoskeleton. In terms of biological role, may act as a protein phosphatase and/or a lipid phosphatase. Involved in fibrillar adhesion formation. Essential for myofibroblast differentiation and myofibroblast-mediated extracellular matrix deposition. Enhances RHOA activation in the presence of DLC1. Plays a role in cell polarization and migration. May be involved in cartilage development and in linking signal transduction pathways to the cytoskeleton. The protein is Tensin-1 of Mus musculus (Mouse).